The chain runs to 194 residues: MSSINITESAQEHFAKLLAQQPEGTNIRVFVVNPGTQNAECGVSYCPPEAVEANDTELKFEKLSAYVDELSLPFLEDADIDYVTDKMGSQLTLKAPNAKMRKVADDAPLFERVEYAIQTQVNPQLAGHGGHVSLMEINDEGVAIVQFGGGCNGCSMVDVTLKEGIEKELLVQFEGELTAVKDLTEHDRGEHSYY.

Residues Cys151 and Cys154 each contribute to the [4Fe-4S] cluster site.

The protein belongs to the NfuA family. As to quaternary structure, homodimer. The cofactor is [4Fe-4S] cluster.

Involved in iron-sulfur cluster biogenesis. Binds a 4Fe-4S cluster, can transfer this cluster to apoproteins, and thereby intervenes in the maturation of Fe/S proteins. Could also act as a scaffold/chaperone for damaged Fe/S proteins. This chain is Fe/S biogenesis protein NfuA, found in Aliivibrio fischeri (strain ATCC 700601 / ES114) (Vibrio fischeri).